A 589-amino-acid chain; its full sequence is Pentalenolactone D synthase (589 aa).

FAD-binding positions include 60-61 (IG), 82-83 (DE), 90-91 (TW), 102-103 (DV), tyrosine 108, valine 152, and methionine 491.

It belongs to the FAD-binding monooxygenase family. FAD is required as a cofactor.

It carries out the reaction 1-deoxy-11-oxopentalenate + NADPH + O2 + H(+) = pentalenolactone D + NADP(+) + H2O. It participates in antibiotic biosynthesis; pentalenolactone biosynthesis. Its function is as follows. Catalyzes the flavin-dependent Baeyer-Villiger oxidation of 1-deoxy-11-oxopentalenic acid to pentalenolactone D in the biosynthesis of pentalenolactone antibiotic. The chain is Pentalenolactone D synthase (pntE) from Streptomyces arenae.